We begin with the raw amino-acid sequence, 379 residues long: Salicylate/benzoate carboxyl methyltransferase (379 aa).

An S-adenosyl-L-homocysteine-binding site is contributed by Y40. Residue Q47 participates in salicylate binding. C82, N87, D119, L120, S155, and F156 together coordinate S-adenosyl-L-homocysteine. 2 residues coordinate salicylate: H176 and W177. Mg(2+) contacts are provided by N188, D275, F277, and N278.

Belongs to the methyltransferase superfamily. Type-7 methyltransferase family. SABATH subfamily. As to quaternary structure, homodimer. The cofactor is Mg(2+). Expressed in flowers and at lower levels in leaves and stems. Hardly detected in roots and siliques. Expressed in the sepals and the leaf trichomes and hydathodes.

It carries out the reaction benzoate + S-adenosyl-L-methionine = methyl benzoate + S-adenosyl-L-homocysteine. The catalysed reaction is salicylate + S-adenosyl-L-methionine = methyl salicylate + S-adenosyl-L-homocysteine. In terms of biological role, methyltransferase involved in the biosynthesis of methylsalicylate in response to stresses. Utilizes salicylic acid (SA) more efficiently than benzoic acid (BA). Can also use anthranilic acid and m-hydroxybenzoic acid as substrate. The protein is Salicylate/benzoate carboxyl methyltransferase (BSMT1) of Arabidopsis thaliana (Mouse-ear cress).